A 308-amino-acid polypeptide reads, in one-letter code: Maspardin (308 aa).

The 73-residue stretch at 87 to 159 folds into the AB hydrolase-1 domain; it reads FCDGFRKLLD…NSFWLMPAFM (73 aa). At serine 304 the chain carries Phosphoserine.

It belongs to the AB hydrolase superfamily. Interacts with CD4. Interacts with ALDH16A1. Expressed in all tissues tested, including heart, brain, placenta, lung, liver, skeletal muscle, kidney and pancreas. Expressed in J.CaM1.6, HuT 78 and HeLa cell lines (at protein level).

Its subcellular location is the cytoplasm. The protein resides in the cytosol. The protein localises to the membrane. It localises to the endosome membrane. It is found in the golgi apparatus. Its subcellular location is the trans-Golgi network membrane. Functionally, may play a role as a negative regulatory factor in CD4-dependent T-cell activation. The sequence is that of Maspardin (SPG21) from Homo sapiens (Human).